A 382-amino-acid chain; its full sequence is Polyadenylate-binding protein 5 (382 aa).

4 RRM domains span residues 18–96, 106–182, 199–276, and 302–378; these read AALY…WSQP, GNIF…RFKF, TNVF…RAQK, and VPIY…LGQA.

The protein resides in the cytoplasm. Its function is as follows. Binds the poly(A) tail of mRNA. May be involved in cytoplasmic regulatory processes of mRNA metabolism. Can probably bind to cytoplasmic RNA sequences other than poly(A) in vivo. In Gorilla gorilla gorilla (Western lowland gorilla), this protein is Polyadenylate-binding protein 5 (PABPC5).